A 1763-amino-acid polypeptide reads, in one-letter code: Non-reducing polyketide synthase PKS19 (1763 aa).

Positions 20–261 (GDQRNLFRKL…PMKKVQGMWH (242 aa)) are N-terminal acylcarrier protein transacylase domain (SAT). Residues 390–822 (SSKIAVVGMA…GGNTSIIIEE (433 aa)) enclose the Ketosynthase family 3 (KS3) domain. Catalysis depends on for beta-ketoacyl synthase activity residues Cys561, His696, and His740. The tract at residues 922–1227 (FAFTGQGTFY…QRDTDNWLTL (306 aa)) is malonyl-CoA:ACP transacylase (MAT) domain. The tract at residues 1307–1439 (HRLISEQYTD…VFYEDPSSWL (133 aa)) is N-terminal hotdog fold. In terms of domain architecture, PKS/mFAS DH spans 1307–1609 (HRLISEQYTD…FLQWPRVMLN (303 aa)). A product template (PT) domain region spans residues 1334-1588 (GVVDGHAMNG…FVGDVYVLQG (255 aa)). His1339 acts as the Proton acceptor; for dehydratase activity in catalysis. A C-terminal hotdog fold region spans residues 1461–1609 (VTGKASKLTT…FLQWPRVMLN (149 aa)). The Proton donor; for dehydratase activity role is filled by Asp1522. The disordered stretch occupies residues 1619 to 1690 (AKPAAKVPGK…MEELPSPPAG (72 aa)). Residues 1635–1647 (PHFKPHHVSRHKP) show a composition bias toward basic residues. The region spanning 1689–1763 (AGMNDDMEKA…TIQDLKALLR (75 aa)) is the Carrier domain. Position 1726 is an O-(pantetheine 4'-phosphoryl)serine (Ser1726).

Non-reducing polyketide synthase that mediates the biosynthesis of alternariol (AOH), a micotoxin that seems not to be involved in virulence and oxidative stress tolerance. PKS19 alone is sufficient for AOH synthesis which is initiated by priming with acetyl-CoA, followed by sequential condensations of 6 malonyl-CoA units. The polypeptide is Non-reducing polyketide synthase PKS19 (Phaeosphaeria nodorum (strain SN15 / ATCC MYA-4574 / FGSC 10173) (Glume blotch fungus)).